The following is a 994-amino-acid chain: Chloride channel protein E (994 aa).

The tract at residues 1–33 (MTRKENEESESLSSSSSPIDNSNNNNNNNNHSI) is disordered. The Cytoplasmic segment spans residues 1 to 163 (MTRKENEESE…HWLGKERIST (163 aa)). Positions 11–32 (SLSSSSSPIDNSNNNNNNNNHS) are enriched in low complexity. 11 helical membrane-spanning segments follow: residues 164–184 (LLFI…CDFL), 227–247 (IVFV…ISFI), 271–291 (VLGF…SAAG), 300–320 (FMHA…FGAI), 334–354 (ALTS…LFAI), 362–382 (VMGN…IFFL), 410–430 (LITF…FVFI), 449–469 (IILV…AGPL), 505–525 (LLVF…LPIP), 527–547 (GAIT…GEIL), and 554–574 (QAIE…SGTI). Residues 644-705 (MKKNINYLSM…LDIHIENIEQ (62 aa)) form the CBS 1 domain. Disordered stretches follow at residues 715 to 767 (FVNN…NSEN), 802 to 822 (IKPN…SDFE), and 846 to 872 (DENS…GDGI). Low complexity-rich tracts occupy residues 717 to 764 (NNNN…NSNN) and 809 to 822 (SSSN…SDFE). Over residues 859-870 (HDDEDDDEEEGD) the composition is skewed to acidic residues. Residues 944 to 994 (MDLAPSQVPDLTPLNKVFHLFTMLGLGFTYVTSLGKLVGVITKNSLMEQDL) form the CBS 2 domain.

Belongs to the chloride channel (TC 2.A.49) family.

It localises to the membrane. Functionally, voltage-gated chloride channel. Chloride channels may have several functions including the regulation of cell volume, membrane potential stabilization and signal transduction. This chain is Chloride channel protein E (clcE), found in Dictyostelium discoideum (Social amoeba).